The chain runs to 556 residues: Arginine--tRNA ligase (556 aa).

A 'HIGH' region motif is present at residues 132–142; that stretch reads ANPTGDLHLGH.

Belongs to the class-I aminoacyl-tRNA synthetase family. In terms of assembly, monomer.

The protein resides in the cytoplasm. It catalyses the reaction tRNA(Arg) + L-arginine + ATP = L-arginyl-tRNA(Arg) + AMP + diphosphate. This Bacillus cereus (strain ATCC 14579 / DSM 31 / CCUG 7414 / JCM 2152 / NBRC 15305 / NCIMB 9373 / NCTC 2599 / NRRL B-3711) protein is Arginine--tRNA ligase.